A 4485-amino-acid polypeptide reads, in one-letter code: Dynein gamma chain, flagellar outer arm (4485 aa).

Residues 1-1780 (MALDNRHRLI…IISICDVDFE (1780 aa)) form a stem region. 5 coiled-coil regions span residues 449-469 (IEGLDTMLKSLNNIIDDVKRK), 804-838 (VEQNRFQKKQAELLAIRNEEVRRAIEDLYTLVRNY), 1093-1114 (VRNVMAVLKEVREKESEIDNLI), 1275-1297 (DVVEKIDEMGEQVQQYQNQSKKL), and 1699-1727 (KKVDALLRDMVNITVRLDLTKNQRTNLET). 4 AAA regions span residues 1781 to 2002 (YSFE…VLRT), 2061 to 2279 (KDAE…ISLK), 2384 to 2638 (TYPK…VFQG), and 2763 to 3013 (KFNE…YRRY). Residues 1819–1826 (GPAGTGKT), 2099–2106 (GPSGSGKS), 2425–2432 (GGPGTAKT), and 2802–2809 (GVGGSGKQ) each bind ATP. Coiled-coil stretches lie at residues 3077-3099 (AKEAEALLKQISESTAIAEKEKQ), 3196-3227 (EAQKMMNQMSFLQDLKDFAKEQINDETVELLE), 3265-3343 (KVVE…LAGE), and 3569-3663 (EDQL…EEYR). The interval 3077–3343 (AKEAEALLKQ…NALIGALAGE (267 aa)) is stalk. AAA regions lie at residues 3412–3643 (LVDD…DVSE) and 3857–4071 (AADY…FLQN).

This sequence belongs to the dynein heavy chain family. As to quaternary structure, consists of at least 3 heavy chains (alpha, beta and gamma), 2 intermediate chains and 8 light chains.

It is found in the cell projection. It localises to the cilium. Its subcellular location is the flagellum. The protein resides in the cytoplasm. The protein localises to the cytoskeleton. It is found in the flagellum axoneme. Force generating protein of eukaryotic cilia and flagella. Produces force towards the minus ends of microtubules. Dynein has ATPase activity; the force-producing power stroke is thought to occur on release of ADP. The chain is Dynein gamma chain, flagellar outer arm (ODA2) from Chlamydomonas reinhardtii (Chlamydomonas smithii).